The primary structure comprises 177 residues: NAD(P)H-quinone oxidoreductase subunit 6, chloroplastic (177 aa).

5 consecutive transmembrane segments (helical) span residues 10-30 (ILLV…VLLT), 32-52 (PIYS…FYIP), 61-81 (AQLL…VMFM), 92-112 (FWTI…FSLI), and 152-172 (FYLP…GAIA).

Belongs to the complex I subunit 6 family. NDH is composed of at least 16 different subunits, 5 of which are encoded in the nucleus.

It is found in the plastid. Its subcellular location is the chloroplast thylakoid membrane. The enzyme catalyses a plastoquinone + NADH + (n+1) H(+)(in) = a plastoquinol + NAD(+) + n H(+)(out). It catalyses the reaction a plastoquinone + NADPH + (n+1) H(+)(in) = a plastoquinol + NADP(+) + n H(+)(out). Its function is as follows. NDH shuttles electrons from NAD(P)H:plastoquinone, via FMN and iron-sulfur (Fe-S) centers, to quinones in the photosynthetic chain and possibly in a chloroplast respiratory chain. The immediate electron acceptor for the enzyme in this species is believed to be plastoquinone. Couples the redox reaction to proton translocation, and thus conserves the redox energy in a proton gradient. This Nuphar advena (Common spatterdock) protein is NAD(P)H-quinone oxidoreductase subunit 6, chloroplastic (ndhG).